We begin with the raw amino-acid sequence, 469 residues long: Glutamate--tRNA ligase (469 aa).

The 'HIGH' region motif lies at 11 to 21 (PSPTGFIHLGN). Residues 118 to 131 (GEKPRYDGTWRPEP) are compositionally biased toward basic and acidic residues. A disordered region spans residues 118–138 (GEKPRYDGTWRPEPGKVLPEP). The 'KMSKS' region signature appears at 243 to 247 (KMSKR). ATP is bound at residue lysine 246.

It belongs to the class-I aminoacyl-tRNA synthetase family. Glutamate--tRNA ligase type 1 subfamily. Monomer.

It is found in the cytoplasm. It carries out the reaction tRNA(Glu) + L-glutamate + ATP = L-glutamyl-tRNA(Glu) + AMP + diphosphate. Its function is as follows. Catalyzes the attachment of glutamate to tRNA(Glu) in a two-step reaction: glutamate is first activated by ATP to form Glu-AMP and then transferred to the acceptor end of tRNA(Glu). This is Glutamate--tRNA ligase from Burkholderia vietnamiensis (strain G4 / LMG 22486) (Burkholderia cepacia (strain R1808)).